We begin with the raw amino-acid sequence, 164 residues long: V-type proton ATPase 16 kDa proteolipid subunit (164 aa).

Topologically, residues 1–9 (MASFSGDET) are lumenal. Residues 10-32 (APFFGFLGAAAALVFSCMGAAYG) traverse the membrane as a helical segment. Over 33–54 (TAKSGVGVASMGVMRPELVMKS) the chain is Cytoplasmic. The chain crosses the membrane as a helical span at residues 55-75 (IVPVVMAGVLGIYGLIIAVII). Residues 76–94 (STGINPKAKSYYLFDGYAH) are Lumenal-facing. Residues 95–116 (LSSGLACGLAGLSAGMAIGIVG) traverse the membrane as a helical segment. At 117–128 (DAGVRANAQQPK) the chain is on the cytoplasmic side. The helical transmembrane segment at 129 to 154 (LFVGMILILIFAEALALYGLIVGIIL) threads the bilayer. At 155-164 (SSRAGQSRAD) the chain is on the lumenal side.

This sequence belongs to the V-ATPase proteolipid subunit family. As to quaternary structure, V-ATPase is a heteromultimeric enzyme composed of a peripheral catalytic V1 complex (main components: subunits A, B, C, D, E, and F) attached to an integral membrane V0 proton pore complex (main component: the proteolipid protein; which is present as a hexamer that forms the proton-conducting pore).

The protein resides in the vacuole membrane. Its function is as follows. Proton-conducting pore forming subunit of the membrane integral V0 complex of vacuolar ATPase. V-ATPase is responsible for acidifying a variety of intracellular compartments in eukaryotic cells. This chain is V-type proton ATPase 16 kDa proteolipid subunit, found in Vigna radiata var. radiata (Mung bean).